The following is a 940-amino-acid chain: Valine--tRNA ligase (940 aa).

Residues 47-57 carry the 'HIGH' region motif; that stretch reads PNVTGVLHMGH. Residues 564-568 carry the 'KMSKS' region motif; it reads KLSKS. K567 lines the ATP pocket. Positions 873-905 form a coiled coil; the sequence is EEHLLKEKGRLEKERVRLERAVENLERLLGDES.

Belongs to the class-I aminoacyl-tRNA synthetase family. ValS type 1 subfamily. As to quaternary structure, monomer.

The protein localises to the cytoplasm. It carries out the reaction tRNA(Val) + L-valine + ATP = L-valyl-tRNA(Val) + AMP + diphosphate. Its function is as follows. Catalyzes the attachment of valine to tRNA(Val). As ValRS can inadvertently accommodate and process structurally similar amino acids such as threonine, to avoid such errors, it has a 'posttransfer' editing activity that hydrolyzes mischarged Thr-tRNA(Val) in a tRNA-dependent manner. This is Valine--tRNA ligase from Chlamydia pneumoniae (Chlamydophila pneumoniae).